A 794-amino-acid polypeptide reads, in one-letter code: Solute carrier family 26 member 9 (794 aa).

Residues 1 to 70 (MNKVRPRYII…WLPKYNIKGN (70 aa)) lie on the Cytoplasmic side of the membrane. Residues 71-96 (LLNDALGGISAGTIQIPQGMAFALLA) traverse the membrane as a helical segment. Over 97 to 100 (NLPP) the chain is Extracellular. Residues 101 to 109 (VNGLYSSFF) form a helical membrane-spanning segment. Topologically, residues 110–129 (PLVVYFFMGGIPQMVPGTFA) are cytoplasmic. Residues 130–142 (VISIIVGNVCLKL) traverse the membrane as a helical segment. At 143–160 (APESHFQNVTSNGTITNI) the chain is on the extracellular side. The helical transmembrane segment at 161 to 189 (EAMNTARMHISATLACLTAIIQIALSFVQ) threads the bilayer. The Cytoplasmic portion of the chain corresponds to 190-199 (FGFVAIYLSE). Residues 200–222 (SFIRGFMTAAGLQILISVLKYIF) form a helical membrane-spanning segment. Over 223-235 (GVSIPPYSGVLAI) the chain is Extracellular. The segment at residues 236-244 (IYTFIDICK) is an intramembrane region (helical). Residues 245–252 (ELPKTNVA) are Extracellular-facing. Residues 253 to 273 (SLIFALISTVLLIIVKELNMK) traverse the membrane as a helical segment. Residues 274–284 (FMHKIRFPIPM) are Cytoplasmic-facing. The helical transmembrane segment at 285–297 (EIIIVIVATAVSG) threads the bilayer. Residues 298-332 (SFKLPERYHMNVVGHIPLGFPSPTVPNVTQWDEMV) are Extracellular-facing. The helical transmembrane segment at 333–356 (GTAFSLAIVGYVINLAMGRTLGAK) threads the bilayer. Residues 357 to 363 (HGFDVDA) lie on the Cytoplasmic side of the membrane. Residues 364–377 (NQEMLALGSGNFFG) traverse the membrane as a helical segment. The Extracellular segment spans residues 378–388 (SFFFIHVICCA). A helical transmembrane segment spans residues 389 to 398 (LSVTLAVDGA). Topologically, residues 399-403 (GGKSQ) are cytoplasmic. The helical transmembrane segment at 404–417 (IASFFVMMSVMVTI) threads the bilayer. Residues 418-429 (LALGTYLNPLPK) lie on the Extracellular side of the membrane. A helical transmembrane segment spans residues 430 to 455 (SVLGALIAVNLKNSLKQLSDPFYLWK). Residues 456–459 (KSKL) are Cytoplasmic-facing. Residues 460-474 (DCLVWLVSFFSTFIL) traverse the membrane as a helical segment. The Extracellular segment spans residues 475 to 477 (GLP). The helical transmembrane segment at 478–496 (YGLAVGVAFSILVVIFNTQ) threads the bilayer. Topologically, residues 497-794 (FRNGSSLNQV…MFQTEIQTAL (298 aa)) are cytoplasmic. The STAS domain occupies 517 to 739 (VYSKVQPIDG…ITVHDAVLYA (223 aa)).

The protein belongs to the SLC26A/SulP transporter (TC 2.A.53) family. In terms of assembly, homodimer.

It is found in the cell membrane. The protein resides in the endomembrane system. It carries out the reaction chloride(in) = chloride(out). It catalyses the reaction hydrogencarbonate(in) + chloride(out) = hydrogencarbonate(out) + chloride(in). With respect to regulation, inhibited by ammonium and thiosulfate. Ion transporter that can act both as an ion channel and anion exchanger. Mainly acts as a chloride channel, which mediate uncoupled chloride anion transport in an alternate-access mechanism where a saturable binding site is alternately exposed to either one or the other side of the membrane. Also acts as a DIDS- and thiosulfate- sensitive anion exchanger the exchange of chloride for bicarbonate ions across the cell membrane. The polypeptide is Solute carrier family 26 member 9 (slc26a9) (Xenopus tropicalis (Western clawed frog)).